Consider the following 96-residue polypeptide: Co-chaperonin GroES (96 aa).

This sequence belongs to the GroES chaperonin family. Heptamer of 7 subunits arranged in a ring. Interacts with the chaperonin GroEL.

It localises to the cytoplasm. Together with the chaperonin GroEL, plays an essential role in assisting protein folding. The GroEL-GroES system forms a nano-cage that allows encapsulation of the non-native substrate proteins and provides a physical environment optimized to promote and accelerate protein folding. GroES binds to the apical surface of the GroEL ring, thereby capping the opening of the GroEL channel. The chain is Co-chaperonin GroES from Neisseria meningitidis serogroup A / serotype 4A (strain DSM 15465 / Z2491).